We begin with the raw amino-acid sequence, 350 residues long: Putative isomerase YbhH (350 aa).

This sequence belongs to the PrpF family.

In Escherichia coli O6:H1 (strain CFT073 / ATCC 700928 / UPEC), this protein is Putative isomerase YbhH (ybhH).